The following is a 641-amino-acid chain: Threonine--tRNA ligase (641 aa).

One can recognise a TGS domain in the interval 1 to 61; the sequence is MPIITLPDGT…TQNSHIQIIT (61 aa). A catalytic region spans residues 242 to 533; that stretch reads DHRKLGKKYS…LIENYSGNFP (292 aa). Zn(2+) is bound by residues Cys333, His384, and His510.

Belongs to the class-II aminoacyl-tRNA synthetase family. In terms of assembly, homodimer. Zn(2+) serves as cofactor.

The protein resides in the cytoplasm. The catalysed reaction is tRNA(Thr) + L-threonine + ATP = L-threonyl-tRNA(Thr) + AMP + diphosphate + H(+). Its function is as follows. Catalyzes the attachment of threonine to tRNA(Thr) in a two-step reaction: L-threonine is first activated by ATP to form Thr-AMP and then transferred to the acceptor end of tRNA(Thr). Also edits incorrectly charged L-seryl-tRNA(Thr). The sequence is that of Threonine--tRNA ligase from Prochlorococcus marinus (strain NATL2A).